Here is a 121-residue protein sequence, read N- to C-terminus: Large ribosomal subunit protein uL14c (121 aa).

This sequence belongs to the universal ribosomal protein uL14 family. Part of the 50S ribosomal subunit.

The protein resides in the plastid. Its subcellular location is the chloroplast. Binds to 23S rRNA. In Phaeodactylum tricornutum (strain CCAP 1055/1), this protein is Large ribosomal subunit protein uL14c.